Consider the following 634-residue polypeptide: 1,4-alpha-glucan branching enzyme GlgB (634 aa).

Residue Asp305 is the Nucleophile of the active site. Glu357 (proton donor) is an active-site residue.

The protein belongs to the glycosyl hydrolase 13 family. GlgB subfamily. Monomer.

It catalyses the reaction Transfers a segment of a (1-&gt;4)-alpha-D-glucan chain to a primary hydroxy group in a similar glucan chain.. It functions in the pathway glycan biosynthesis; glycogen biosynthesis. In terms of biological role, catalyzes the formation of the alpha-1,6-glucosidic linkages in glycogen by scission of a 1,4-alpha-linked oligosaccharide from growing alpha-1,4-glucan chains and the subsequent attachment of the oligosaccharide to the alpha-1,6 position. The protein is 1,4-alpha-glucan branching enzyme GlgB of Lactiplantibacillus plantarum (strain ATCC BAA-793 / NCIMB 8826 / WCFS1) (Lactobacillus plantarum).